We begin with the raw amino-acid sequence, 121 residues long: Ribonuclease P protein component (121 aa).

It belongs to the RnpA family. Consists of a catalytic RNA component (M1 or rnpB) and a protein subunit.

The enzyme catalyses Endonucleolytic cleavage of RNA, removing 5'-extranucleotides from tRNA precursor.. In terms of biological role, RNaseP catalyzes the removal of the 5'-leader sequence from pre-tRNA to produce the mature 5'-terminus. It can also cleave other RNA substrates such as 4.5S RNA. The protein component plays an auxiliary but essential role in vivo by binding to the 5'-leader sequence and broadening the substrate specificity of the ribozyme. The chain is Ribonuclease P protein component from Nitrosomonas eutropha (strain DSM 101675 / C91 / Nm57).